We begin with the raw amino-acid sequence, 61 residues long: Temporin-ALj (61 aa).

The signal sequence occupies residues 1-22; that stretch reads MFTLKKSLLLLFFLATINLSFC. Positions 23–46 are excised as a propeptide; the sequence is EQERNAEEERRDEPDERNAEVEKR. Leucine amide is present on Leu59.

Belongs to the frog skin active peptide (FSAP) family. Temporin subfamily. Expressed by the skin glands.

The protein localises to the secreted. In terms of biological role, antimicrobial peptide with activity against Gram-positive and Gram-negative bacteria and against fungi. Has been tested against S.aureus (MIC=7.5 ug/mL), B.pumilus (MIC=15.0 ug/mL), B.cereus (MIC=75.0 ug/mL), E.coli (MIC=15.0 ug/mL), B.dysenteriae (MIC=30.0 ug/mL), A.cacoaceticus (MIC=60.0 ug/mL), P.aeruginosa (MIC=7.5 ug/mL) and C.albicans (MIC=5.0 ug/mL). Also shows a weak hemolytic activity. The sequence is that of Temporin-ALj from Amolops loloensis (Lolokou Sucker Frog).